The chain runs to 286 residues: Fructose-bisphosphate aldolase (286 aa).

D-glyceraldehyde 3-phosphate is bound at residue Ser-50. The active-site Proton donor is the Asp-85. His-86, Asp-107, Glu-137, and His-181 together coordinate Zn(2+). A dihydroxyacetone phosphate-binding site is contributed by Gly-182. His-209 lines the Zn(2+) pocket. Dihydroxyacetone phosphate contacts are provided by residues 210 to 212 and 231 to 234; these read GGT and NVNT.

It belongs to the class II fructose-bisphosphate aldolase family. Requires Zn(2+) as cofactor.

The catalysed reaction is beta-D-fructose 1,6-bisphosphate = D-glyceraldehyde 3-phosphate + dihydroxyacetone phosphate. Its pathway is carbohydrate degradation; glycolysis; D-glyceraldehyde 3-phosphate and glycerone phosphate from D-glucose: step 4/4. Its function is as follows. Catalyzes the aldol condensation of dihydroxyacetone phosphate (DHAP or glycerone-phosphate) with glyceraldehyde 3-phosphate (G3P) to form fructose 1,6-bisphosphate (FBP) in gluconeogenesis and the reverse reaction in glycolysis. In Staphylococcus epidermidis (strain ATCC 35984 / DSM 28319 / BCRC 17069 / CCUG 31568 / BM 3577 / RP62A), this protein is Fructose-bisphosphate aldolase (fba).